The sequence spans 311 residues: Dehydrogenase/reductase SDR family member 7C (311 aa).

The first 18 residues, 1-18, serve as a signal peptide directing secretion; sequence MGVTAVLMLPLLLLGISG. NAD(+) is bound by residues Ser-47, Leu-49, Tyr-191, Lys-195, and Ser-226. Tyr-191 functions as the Proton acceptor in the catalytic mechanism.

Belongs to the short-chain dehydrogenases/reductases (SDR) family.

The protein resides in the sarcoplasmic reticulum membrane. The enzyme catalyses all-trans-retinol + NAD(+) = all-trans-retinal + NADH + H(+). NADH-dependent oxidoreductase which catalyzes the oxidation of all-trans-retinol to all-trans-retinal. Plays a role in the regulation of cardiac and skeletal muscle metabolic functions. Maintains Ca(2+) intracellular homeostasis by repressing Ca(2+) release from the sarcoplasmic reticulum (SR) in myotubes, possibly through local alternations in NAD/NADH or retinol/retinal. Also plays a role in Ca(2+) homeostasis by controlling Ca(2+) overload in the cytosol and the SR in myotubes. Involved in glucose uptake into skeletal muscles and muscle performance by activating PI3K and mTORC2-mediated AKT1 phosphorylation signaling pathways, possibly through the action of its downstream catalytic product all-trans-retinoic acid. In Bos taurus (Bovine), this protein is Dehydrogenase/reductase SDR family member 7C (DHRS7C).